The primary structure comprises 436 residues: MASLPIFDSVSRFLPLTNEDEQFWWRLTGQHMARMMHEAGYPEDRQVECLLFHRFKVVPCLGPRPHSDIPWYKSRVGGGAADGCPINYSWRFGTADRKPHIRNFIEPLGTLTNTPADRLNEVATKALLQDYAMTLPNVDLELFWTFAPHYRPRIIEKADMEKLAGASLLVGAEMSPDSRTIDIKAYMYPRVPSQTSQLLTTILPQAMRDAYGEDVCLDSLNLVRDFMTSDPQGSQLTLTGTTGIDCCKLQDTRVKIYVITRNTSFDHISAIMTLGGRRPISKELLSQLQTLWYELKGAPAELPSSEQLPAQTKPDGSKNPIVVPFYFDIQPRLALPDVKAYIDVSTSPVSDLAAAKAVVRHLEHHGSGQNPQAYLNVLQDITPVEELETQKGALAFYSVAVKKNELDITSYFNPQVYKRYFAHEVQLNGQRRSAFE.

This sequence belongs to the tryptophan dimethylallyltransferase family.

It participates in secondary metabolite biosynthesis. In terms of biological role, prenyltransferase; part of the gene cluster that mediates the biosynthesis of neosartoricin B, a prenylated anthracenone that probably exhibits T-cell antiproliferative activity, suggestive of a physiological role as an immunosuppressive agent. The non-reducing polyketide synthase nscA probably synthesizes and cyclizes the decaketide backbone. The hydrolase nscB then mediates the product release through hydrolysis followed by spontaneous decarboxylation. The prenyltransferase nscD catalyzes the addition of the dimethylallyl group to the aromatic C5. The FAD-dependent monooxygenase nscC is then responsible for the stereospecific hydroxylation at C2. Neosartoricin B can be converted into two additional compounds neosartoricins C and D. Neosartoricin C is a spirocyclic compound that is cyclized through the attack of C3 hydroxyl on C14, followed by dehydration. On the other hand, neosartoricin D is a further cyclized compound in which attack of C2 on C14 in neosartoricin C results in the formation of the acetal-containing dioxabicyclo-octanone ring. Both of these compounds are novel and possibly represent related metabolites of the gene cluster. The chain is Prenyltransferase nscD from Arthroderma gypseum (strain ATCC MYA-4604 / CBS 118893) (Microsporum gypseum).